Consider the following 122-residue polypeptide: Ribosome-binding factor A (122 aa).

The protein belongs to the RbfA family. In terms of assembly, monomer. Binds 30S ribosomal subunits, but not 50S ribosomal subunits or 70S ribosomes.

It is found in the cytoplasm. Its function is as follows. One of several proteins that assist in the late maturation steps of the functional core of the 30S ribosomal subunit. Associates with free 30S ribosomal subunits (but not with 30S subunits that are part of 70S ribosomes or polysomes). Required for efficient processing of 16S rRNA. May interact with the 5'-terminal helix region of 16S rRNA. This is Ribosome-binding factor A from Burkholderia mallei (strain NCTC 10229).